The primary structure comprises 169 residues: Peptide deformylase (169 aa).

2 residues coordinate Fe cation: C91 and H133. E134 is an active-site residue. H137 is a Fe cation binding site.

Belongs to the polypeptide deformylase family. Requires Fe(2+) as cofactor.

It carries out the reaction N-terminal N-formyl-L-methionyl-[peptide] + H2O = N-terminal L-methionyl-[peptide] + formate. Its function is as follows. Removes the formyl group from the N-terminal Met of newly synthesized proteins. Requires at least a dipeptide for an efficient rate of reaction. N-terminal L-methionine is a prerequisite for activity but the enzyme has broad specificity at other positions. This chain is Peptide deformylase, found in Serratia proteamaculans (strain 568).